We begin with the raw amino-acid sequence, 457 residues long: uncharacterized protein (457 aa).

The region spanning 6–64 (PVHKGEVLDVTIMDLTYQGMGVAKVDNYPIFIENALPEEKITVKVTKTTKNFAFGDVEK) is the TRAM domain. Positions 287, 316, 337, and 385 each coordinate S-adenosyl-L-methionine. The active-site Nucleophile is C412.

Belongs to the class I-like SAM-binding methyltransferase superfamily. RNA M5U methyltransferase family.

This is an uncharacterized protein from Lactiplantibacillus plantarum (strain ATCC BAA-793 / NCIMB 8826 / WCFS1) (Lactobacillus plantarum).